The following is a 152-amino-acid chain: D-aminoacyl-tRNA deacylase (152 aa).

The short motif at 137–138 is the Gly-cisPro motif, important for rejection of L-amino acids element; that stretch reads GP.

Belongs to the DTD family. Homodimer.

The protein localises to the cytoplasm. The catalysed reaction is glycyl-tRNA(Ala) + H2O = tRNA(Ala) + glycine + H(+). It catalyses the reaction a D-aminoacyl-tRNA + H2O = a tRNA + a D-alpha-amino acid + H(+). An aminoacyl-tRNA editing enzyme that deacylates mischarged D-aminoacyl-tRNAs. Also deacylates mischarged glycyl-tRNA(Ala), protecting cells against glycine mischarging by AlaRS. Acts via tRNA-based rather than protein-based catalysis; rejects L-amino acids rather than detecting D-amino acids in the active site. By recycling D-aminoacyl-tRNA to D-amino acids and free tRNA molecules, this enzyme counteracts the toxicity associated with the formation of D-aminoacyl-tRNA entities in vivo and helps enforce protein L-homochirality. This Geobacillus sp. (strain WCH70) protein is D-aminoacyl-tRNA deacylase.